Here is a 354-residue protein sequence, read N- to C-terminus: Transcription factor BHLH3 (354 aa).

A disordered region spans residues 124–143 (VAEEETSGDKALLHGGGGSS). The basic motif stretch occupies residues 178-191 (GTPSKNLMAERRRR). The 50-residue stretch at 178-227 (GTPSKNLMAERRRRKRLNDRLSMLRSIVPKISKMDRTSILGDTIDYVKEL) folds into the bHLH domain. Residues 192-227 (KRLNDRLSMLRSIVPKISKMDRTSILGDTIDYVKEL) are helix-loop-helix motif.

Belongs to the bHLH protein family. As to quaternary structure, interacts with LAX1. Phosphorylated by MAPK3 and MAPK6.

It localises to the nucleus. Its subcellular location is the cytoplasm. Transcription factor involved in defense responses that functions downstream of RAC1 and upstream of PAL1 and WRKY19 genes. The chain is Transcription factor BHLH3 from Oryza sativa subsp. japonica (Rice).